An 824-amino-acid chain; its full sequence is MSLLGDPLQALPPSAAPTGPLLAPPAGATLNRLREPLLRRLSELLDQAPEGRGWRRLAELAGSRGRLRLSCLDLEQCSLKVLEPEGSPSLCLLKLMGEKGCTVTELSDFLQAMEHTEVLQLLSPPGIKITVNPESKAVLAGQFVKLCCRATGHPFVQYQWFKMNKEIPNGNTSELIFNAVHVKDAGFYVCRVNNNFTFEFSQWSQLDVCDIPESFQRSVDGVSESKLQICVEPTSQKLMPGSTLVLQCVAVGSPIPHYQWFKNELPLTHETKKLYMVPYVDLEHQGTYWCHVYNDRDSQDSKKVEIIIGRTDEAVECTEDELNNLGHPDNKEQTTDQPLAKDKVALLIGNMNYREHPKLKAPLVDVYELTNLLRQLDFKVVSLLDLTEYEMRNAVDEFLLLLDKGVYGLLYYAGHGYENFGNSFMVPVDAPNPYRSENCLCVQNILKLMQEKETGLNVFLLDMCRKRNDYDDTIPILDALKVTANIVFGYATCQGAEAFEIQHSGLANGIFMKFLKDRLLEDKKITVLLDEVAEDMGKCHLTKGKQALEIRSSLSEKRALTDPIQGTEYSAESLVRNLQWAKAHELPESMCLKFDCGVQIQLGFAAEFSNVMIIYTSIVYKPPEIIMCDAYVTDFPLDLDIDPKDANKGTPEETGSYLVSKDLPKHCLYTRLSSLQKLKEHLVFTVCLSYQYSGLEDTVEDKQEVNVGKPLIAKLDMHRGLGRKTCFQTCLMSNGPYQSSAATSGGAGHYHSLQDPFHGVYHSHPGNPSNVTPADSCHCSRTPDAFISSFAHHASCHFSRSNVPVETTDEIPFSFSDRLRISEK.

The disordered stretch occupies residues M1–G27. S2 is subject to N-acetylserine. Over residues L11–G27 the composition is skewed to low complexity. A Death domain is found at R39 to G126. Ig-like C2-type domains lie at P125–S201 and P212–E305. S135 is modified (phosphoserine). 2 cysteine pairs are disulfide-bonded: C147–C190 and C248–C290. The tract at residues I348–D562 is caspase-like. Residues L369 to L376 carry the Nuclear export signal motif. Catalysis depends on residues H415 and C464.

This sequence belongs to the peptidase C14B family. Homooligomer; forms oligomers which bind to TRAF6. Forms a complex with CARD14 and MALT1; resulting in the formation of a CBM (CARD14-BCL10-MALT1) complex. Forms a complex with CARD11 and MALT1; resulting in the formation of a CBM (CARD11-BCL10-MALT1) complex. Forms a complex with CARD9 and MALT1; resulting in the formation of a CBM (CARD9-BCL10-MALT1) complex. Highly expressed in peripheral blood mononuclear cells. Detected at lower levels in bone marrow, thymus and lymph node, and at very low levels in colon and lung.

Its subcellular location is the cytoplasm. It is found in the perinuclear region. It localises to the nucleus. Protease that enhances BCL10-induced activation: acts via formation of CBM complexes that channel adaptive and innate immune signaling downstream of CARD domain-containing proteins (CARD9, CARD11 and CARD14) to activate NF-kappa-B and MAP kinase p38 pathways which stimulate expression of genes encoding pro-inflammatory cytokines and chemokines. Mediates BCL10 cleavage: MALT1-dependent BCL10 cleavage plays an important role in T-cell antigen receptor-induced integrin adhesion. Involved in the induction of T helper 17 cells (Th17) differentiation. Cleaves RC3H1 and ZC3H12A in response to T-cell receptor (TCR) stimulation which releases their cooperatively repressed targets to promote Th17 cell differentiation. Also mediates cleavage of N4BP1 in T-cells following TCR-mediated activation, leading to N4BP1 inactivation. May also have ubiquitin ligase activity: binds to TRAF6, inducing TRAF6 oligomerization and activation of its ligase activity. This Homo sapiens (Human) protein is Mucosa-associated lymphoid tissue lymphoma translocation protein 1.